A 206-amino-acid polypeptide reads, in one-letter code: Large ribosomal subunit protein uL4 (206 aa).

Residues 63–94 are disordered; the sequence is MYKQKGTGRARHHSARAPQFRGGGKAHGPVVR. The segment covering 64–77 has biased composition (basic residues); it reads YKQKGTGRARHHSA.

The protein belongs to the universal ribosomal protein uL4 family. Part of the 50S ribosomal subunit.

Functionally, one of the primary rRNA binding proteins, this protein initially binds near the 5'-end of the 23S rRNA. It is important during the early stages of 50S assembly. It makes multiple contacts with different domains of the 23S rRNA in the assembled 50S subunit and ribosome. Forms part of the polypeptide exit tunnel. The chain is Large ribosomal subunit protein uL4 from Mesorhizobium japonicum (strain LMG 29417 / CECT 9101 / MAFF 303099) (Mesorhizobium loti (strain MAFF 303099)).